We begin with the raw amino-acid sequence, 328 residues long: GTP 3',8-cyclase (328 aa).

Residues 1-229 (MNQVDYLRIS…DAQVRGSGPA (229 aa)) enclose the Radical SAM core domain. Arg-8 is a GTP binding site. [4Fe-4S] cluster is bound by residues Cys-15 and Cys-19. Tyr-21 serves as a coordination point for S-adenosyl-L-methionine. A [4Fe-4S] cluster-binding site is contributed by Cys-22. Arg-60 is a binding site for GTP. Residue Gly-64 participates in S-adenosyl-L-methionine binding. Residue Thr-91 participates in GTP binding. Ser-115 contacts S-adenosyl-L-methionine. Lys-155 provides a ligand contact to GTP. Residue Met-189 coordinates S-adenosyl-L-methionine. 2 residues coordinate [4Fe-4S] cluster: Cys-252 and Cys-255. Residue 257 to 259 (RMR) coordinates GTP. Cys-269 provides a ligand contact to [4Fe-4S] cluster.

Belongs to the radical SAM superfamily. MoaA family. As to quaternary structure, monomer and homodimer. [4Fe-4S] cluster serves as cofactor.

The catalysed reaction is GTP + AH2 + S-adenosyl-L-methionine = (8S)-3',8-cyclo-7,8-dihydroguanosine 5'-triphosphate + 5'-deoxyadenosine + L-methionine + A + H(+). It participates in cofactor biosynthesis; molybdopterin biosynthesis. Functionally, catalyzes the cyclization of GTP to (8S)-3',8-cyclo-7,8-dihydroguanosine 5'-triphosphate. The protein is GTP 3',8-cyclase of Trichormus variabilis (strain ATCC 29413 / PCC 7937) (Anabaena variabilis).